We begin with the raw amino-acid sequence, 300 residues long: Estradiol 17-beta-dehydrogenase 11 (300 aa).

The first 18 residues, 1–18, serve as a signal peptide directing secretion; sequence MKILLDLLLLLPLLIVCC. NADP(+) is bound at residue 40-67; it reads LITGAGHGIGRLTAYEFAKLKSKLVLWD. Serine 172 serves as a coordination point for substrate. The Proton acceptor role is filled by tyrosine 185. Lysine 189 serves as a coordination point for NADP(+).

It belongs to the short-chain dehydrogenases/reductases (SDR) family. 17-beta-HSD 3 subfamily.

It localises to the endoplasmic reticulum. Its subcellular location is the lipid droplet. It carries out the reaction 17beta-estradiol + NAD(+) = estrone + NADH + H(+). The enzyme catalyses 17beta-estradiol + NADP(+) = estrone + NADPH + H(+). In terms of biological role, can convert androstan-3-alpha,17-beta-diol (3-alpha-diol) to androsterone in vitro, suggesting that it may participate in androgen metabolism during steroidogenesis. May act by metabolizing compounds that stimulate steroid synthesis and/or by generating metabolites that inhibit it. Has no activity toward DHEA (dehydroepiandrosterone), or A-dione (4-androste-3,17-dione), and only a slight activity toward testosterone to A-dione. This chain is Estradiol 17-beta-dehydrogenase 11 (HSD17B11), found in Macaca fascicularis (Crab-eating macaque).